We begin with the raw amino-acid sequence, 382 residues long: cAMP-dependent protein kinase type I-alpha regulatory subunit (382 aa).

Alanine 2 carries the N-acetylalanine modification. The interval 2-136 is dimerization and phosphorylation; it reads ATSSSSSSEE…AALAKAIEKN (135 aa). The disordered stretch occupies residues 62-96; the sequence is TKQLLNQQKSGSRSDSREDEISPPPPMNPVVKGRR. Positions 97 to 101 match the Pseudophosphorylation motif motif; that stretch reads RRGAI. 3',5'-cyclic AMP-binding positions include 138-255, glutamate 203, arginine 212, 256-382, glutamate 327, and arginine 336; these read LFAH…SKVS and ILES…SLSV.

It belongs to the cAMP-dependent kinase regulatory chain family. In terms of assembly, the inactive form of the enzyme is composed of two regulatory chains and two catalytic chains. Activation by cAMP produces two active catalytic monomers and a regulatory dimer that binds four cAMP molecules. The pseudophosphorylation site binds to the substrate-binding region of the catalytic chain but is not phosphorylated. The physiological significance of phosphorylations by other kinases is unclear.

It localises to the cell membrane. The protein is cAMP-dependent protein kinase type I-alpha regulatory subunit (PRKAR1A) of Gallus gallus (Chicken).